The chain runs to 403 residues: Imidazolonepropionase (403 aa).

2 residues coordinate Fe(3+): histidine 69 and histidine 71. Zn(2+)-binding residues include histidine 69 and histidine 71. Positions 78, 141, and 174 each coordinate 4-imidazolone-5-propanoate. Tyrosine 141 contributes to the N-formimidoyl-L-glutamate binding site. Histidine 239 is a Fe(3+) binding site. Histidine 239 lines the Zn(2+) pocket. Glutamine 242 contributes to the 4-imidazolone-5-propanoate binding site. Aspartate 314 serves as a coordination point for Fe(3+). Aspartate 314 provides a ligand contact to Zn(2+). N-formimidoyl-L-glutamate contacts are provided by asparagine 316 and glycine 318. Serine 319 lines the 4-imidazolone-5-propanoate pocket.

The protein belongs to the metallo-dependent hydrolases superfamily. HutI family. It depends on Zn(2+) as a cofactor. Fe(3+) serves as cofactor.

The protein localises to the cytoplasm. It catalyses the reaction 4-imidazolone-5-propanoate + H2O = N-formimidoyl-L-glutamate. Its pathway is amino-acid degradation; L-histidine degradation into L-glutamate; N-formimidoyl-L-glutamate from L-histidine: step 3/3. Catalyzes the hydrolytic cleavage of the carbon-nitrogen bond in imidazolone-5-propanoate to yield N-formimidoyl-L-glutamate. It is the third step in the universal histidine degradation pathway. The chain is Imidazolonepropionase from Legionella pneumophila (strain Lens).